The following is a 357-amino-acid chain: Chorismate synthase (357 aa).

Residue Arg-48 coordinates NADP(+). FMN-binding positions include 125 to 127 (RSS), 238 to 239 (NA), Gly-282, 297 to 301 (KPTSS), and Arg-323.

It belongs to the chorismate synthase family. Homotetramer. FMNH2 is required as a cofactor.

The catalysed reaction is 5-O-(1-carboxyvinyl)-3-phosphoshikimate = chorismate + phosphate. It participates in metabolic intermediate biosynthesis; chorismate biosynthesis; chorismate from D-erythrose 4-phosphate and phosphoenolpyruvate: step 7/7. Functionally, catalyzes the anti-1,4-elimination of the C-3 phosphate and the C-6 proR hydrogen from 5-enolpyruvylshikimate-3-phosphate (EPSP) to yield chorismate, which is the branch point compound that serves as the starting substrate for the three terminal pathways of aromatic amino acid biosynthesis. This reaction introduces a second double bond into the aromatic ring system. The protein is Chorismate synthase of Gluconacetobacter diazotrophicus (strain ATCC 49037 / DSM 5601 / CCUG 37298 / CIP 103539 / LMG 7603 / PAl5).